The sequence spans 211 residues: 3-demethoxyubiquinol 3-hydroxylase (211 aa).

Residues Glu60, Glu90, His93, Glu142, Glu174, and His177 each contribute to the Fe cation site.

This sequence belongs to the COQ7 family. Fe cation serves as cofactor.

The protein resides in the cell membrane. It catalyses the reaction a 5-methoxy-2-methyl-3-(all-trans-polyprenyl)benzene-1,4-diol + AH2 + O2 = a 3-demethylubiquinol + A + H2O. It participates in cofactor biosynthesis; ubiquinone biosynthesis. In terms of biological role, catalyzes the hydroxylation of 2-nonaprenyl-3-methyl-6-methoxy-1,4-benzoquinol during ubiquinone biosynthesis. The polypeptide is 3-demethoxyubiquinol 3-hydroxylase (Francisella tularensis subsp. novicida (strain U112)).